A 121-amino-acid chain; its full sequence is Large ribosomal subunit protein bL12 (121 aa).

Belongs to the bacterial ribosomal protein bL12 family. As to quaternary structure, homodimer. Part of the ribosomal stalk of the 50S ribosomal subunit. Forms a multimeric L10(L12)X complex, where L10 forms an elongated spine to which 2 to 4 L12 dimers bind in a sequential fashion. Binds GTP-bound translation factors.

In terms of biological role, forms part of the ribosomal stalk which helps the ribosome interact with GTP-bound translation factors. Is thus essential for accurate translation. In Streptococcus uberis (strain ATCC BAA-854 / 0140J), this protein is Large ribosomal subunit protein bL12.